A 190-amino-acid chain; its full sequence is Nodulation protein L (190 aa).

Belongs to the transferase hexapeptide repeat family.

Acetyltransferase implicated in the O-acetylation of Nod factors. The polypeptide is Nodulation protein L (nodL) (Rhizobium leguminosarum bv. viciae).